A 958-amino-acid chain; its full sequence is MNWMPALSLALLWTAWLVCGSEKTGRLAERGSHGVRKVPQSHRAPSSLLRRSGASLKNLSPSPQHPVTKRDSSVPPKAPANLLKEESRSQPRSVGTRTRRLQRLTAAAKYSKSEMIKDEGISTASQSRAVRFPSGSSSPNVLASFAGKNRVWVISAPHASEGYYRLMMSLLKNDVYCELAERHIQQIVLFHEEGEEGGKVRRITNEGKILEQPLDPALIPKLMSFLKLEKGKFGMVLLKKTLQVEERYPYPVRLEAMYEVIDQNPIRKIEKMRQKGFIQTCKAAGVEGQVVEDDNNGGSTQSIPGGGHVQVSAGGRKEEPRRSSNQPTRTKTVRKPMTTTVATPLPTVRTTTLPTTTTATRATTRTVTTASRPTTTTTPLPTTQRTWTTKSHTTTEYHRLPASPEVTTPRVMASEDFYSPVWKANRRDRQRGHPEKHLAATRKPSKGGRYESFTEVPTAPSVHYTKASMSRFKDNRTDRKDYNHRDLNVTPGQHKPTKTKPPKKKTQEKILSNEYEDKYDPSKPASPHLEEEIAVGSIPPKKGKESKKHERMDKPEKKKKKDRPDKLHKSEKQSKKDKAEKKSKQDKDRSKKNKKGSRTENEDFPKPNKKPFLQPPRKSVANLLDYFEGKRRLILITTPKADNTMYVQQRDEYLESFCKMATRKISVITIFGTMNNSSMKIDHFQLDNEKPMKVIEDEDLVDQQLISELRKEYGMTYNDFFMVLTDTDMKVKQYYEVPIAMKSVFDLIDTFQSRIKDMERQKKEGIVCKEDKKQSLESFLSRFRWRRRLVVISAPSDEDWAYSQQLAALSGQACNFGLRHITILKLLGVGEDIGGVLELYPINGSATVDREDIPANLVKDIRNYFQISPEYFSMLLVGKDGNVKSWYPSPMWSMAIVYDLIDSMQLRRQEMTIQQSLGMQCPEDEYGGYGYHSYHQGYQEGYQDDYRHHGSYHHGYPY.

Positions 1–21 (MNWMPALSLALLWTAWLVCGS) are cleaved as a signal peptide. Disordered stretches follow at residues 30-99 (RGSH…TRTR), 290-335 (VVED…TVRK), 358-396 (TATRATTRTVTTASRPTTTTTPLPTTQRTWTTKSHTTTE), 424-452 (ANRRDRQRGHPEKHLAATRKPSKGGRYES), and 467-617 (ASMS…QPPR). Residues 358 to 389 (TATRATTRTVTTASRPTTTTTPLPTTQRTWTT) show a composition bias toward low complexity. Composition is skewed to basic and acidic residues over residues 425-438 (NRRDRQRGHPEKHL) and 471-487 (RFKDNRTDRKDYNHRDL). Basic residues predominate over residues 495 to 506 (KPTKTKPPKKKT). Basic and acidic residues-rich tracts occupy residues 547-589 (KKHE…DKDR) and 597-606 (SRTENEDFPK).

It belongs to the CCDC80 family. As to quaternary structure, binds to various extracellular matrix proteins.

The protein resides in the secreted. Its subcellular location is the extracellular space. The protein localises to the extracellular matrix. Promotes cell adhesion and matrix assembly. May play a role in eye formation. This is Coiled-coil domain-containing protein 80 (CCDC80) from Gallus gallus (Chicken).